The chain runs to 118 residues: Ribonuclease P protein component (118 aa).

It belongs to the RnpA family. Consists of a catalytic RNA component (M1 or rnpB) and a protein subunit.

The enzyme catalyses Endonucleolytic cleavage of RNA, removing 5'-extranucleotides from tRNA precursor.. In terms of biological role, RNaseP catalyzes the removal of the 5'-leader sequence from pre-tRNA to produce the mature 5'-terminus. It can also cleave other RNA substrates such as 4.5S RNA. The protein component plays an auxiliary but essential role in vivo by binding to the 5'-leader sequence and broadening the substrate specificity of the ribozyme. The polypeptide is Ribonuclease P protein component (Rickettsia typhi (strain ATCC VR-144 / Wilmington)).